Here is a 349-residue protein sequence, read N- to C-terminus: N-lysine methyltransferase KMT5A (349 aa).

Residues 18-46 (AAVAATAPGPEMVEQRGPGRPRSDGENVF) are disordered. Serine 57 carries the phosphoserine modification. Residues 65 to 207 (RSPLQEENSV…SEERKKNELI (143 aa)) are disordered. Residues 107–119 (VKSDEQKSKDTRR) are compositionally biased toward basic and acidic residues. Threonine 138 carries the phosphothreonine modification. The segment covering 154-170 (ALKKSLKGKQAPRKKSQ) has biased composition (basic residues). The segment covering 192–207 (SKAELQSEERKKNELI) has biased composition (basic and acidic residues). An SET domain is found at 213–334 (EGMKIDLIDG…AGEELLYDYG (122 aa)). S-adenosyl-L-methionine is bound by residues 223-225 (KGR), tyrosine 268, and 295-296 (NH).

Belongs to the class V-like SAM-binding methyltransferase superfamily. Histone-lysine methyltransferase family. PR/SET subfamily. In terms of assembly, interacts with L3MBTL1. Interacts with SIRT2 (phosphorylated form); the interaction is direct, stimulates KMT5A-mediated methyltransferase activity at histone H4 'Lys-20' (H4K20me1) and is increased in a H(2)O(2)-induced oxidative stress-dependent manner. In terms of processing, ubiquitinated and degraded by the DCX(DTL) complex.

The protein resides in the nucleus. It is found in the chromosome. It catalyses the reaction L-lysyl(20)-[histone H4] + S-adenosyl-L-methionine = N(6)-methyl-L-lysyl(20)-[histone H4] + S-adenosyl-L-homocysteine + H(+). It carries out the reaction L-lysyl-[protein] + S-adenosyl-L-methionine = N(6)-methyl-L-lysyl-[protein] + S-adenosyl-L-homocysteine + H(+). Its function is as follows. Protein-lysine N-methyltransferase that monomethylates both histones and non-histone proteins. Specifically monomethylates 'Lys-20' of histone H4 (H4K20me1). H4K20me1 is enriched during mitosis and represents a specific tag for epigenetic transcriptional repression. Mainly functions in euchromatin regions, thereby playing a central role in the silencing of euchromatic genes. Required for cell proliferation, probably by contributing to the maintenance of proper higher-order structure of DNA during mitosis. Involved in chromosome condensation and proper cytokinesis. Nucleosomes are preferred as substrate compared to free histones. Mediates monomethylation of p53/TP53 at 'Lys-382', leading to repress p53/TP53-target genes. Plays a negative role in TGF-beta response regulation and a positive role in cell migration. The sequence is that of N-lysine methyltransferase KMT5A from Mus musculus (Mouse).